The following is a 454-amino-acid chain: Bifunctional protein GlmU (454 aa).

The tract at residues 1 to 226 is pyrophosphorylase; that stretch reads MALNVVILAA…AIEVEGANNR (226 aa). Residues 8-11, K22, Q73, 78-79, 100-102, G137, E151, N166, and N224 each bind UDP-N-acetyl-alpha-D-glucosamine; these read LAAG, GT, and YGD. D102 contacts Mg(2+). N224 serves as a coordination point for Mg(2+). The tract at residues 227-247 is linker; sequence VQLAQLERAYQAREAEKLMIA. The tract at residues 248–454 is N-acetyltransferase; that stretch reads GANLRDPSRI…GWQRPVKIKE (207 aa). Residues R330 and K348 each coordinate UDP-N-acetyl-alpha-D-glucosamine. H360 (proton acceptor) is an active-site residue. UDP-N-acetyl-alpha-D-glucosamine-binding residues include Y363 and N374. Acetyl-CoA-binding positions include A377, 383–384, S402, A420, and R437; that span reads NY.

The protein in the N-terminal section; belongs to the N-acetylglucosamine-1-phosphate uridyltransferase family. This sequence in the C-terminal section; belongs to the transferase hexapeptide repeat family. As to quaternary structure, homotrimer. Mg(2+) is required as a cofactor.

The protein localises to the cytoplasm. The enzyme catalyses alpha-D-glucosamine 1-phosphate + acetyl-CoA = N-acetyl-alpha-D-glucosamine 1-phosphate + CoA + H(+). It carries out the reaction N-acetyl-alpha-D-glucosamine 1-phosphate + UTP + H(+) = UDP-N-acetyl-alpha-D-glucosamine + diphosphate. It participates in nucleotide-sugar biosynthesis; UDP-N-acetyl-alpha-D-glucosamine biosynthesis; N-acetyl-alpha-D-glucosamine 1-phosphate from alpha-D-glucosamine 6-phosphate (route II): step 2/2. Its pathway is nucleotide-sugar biosynthesis; UDP-N-acetyl-alpha-D-glucosamine biosynthesis; UDP-N-acetyl-alpha-D-glucosamine from N-acetyl-alpha-D-glucosamine 1-phosphate: step 1/1. It functions in the pathway bacterial outer membrane biogenesis; LPS lipid A biosynthesis. Its function is as follows. Catalyzes the last two sequential reactions in the de novo biosynthetic pathway for UDP-N-acetylglucosamine (UDP-GlcNAc). The C-terminal domain catalyzes the transfer of acetyl group from acetyl coenzyme A to glucosamine-1-phosphate (GlcN-1-P) to produce N-acetylglucosamine-1-phosphate (GlcNAc-1-P), which is converted into UDP-GlcNAc by the transfer of uridine 5-monophosphate (from uridine 5-triphosphate), a reaction catalyzed by the N-terminal domain. In Shewanella sp. (strain MR-7), this protein is Bifunctional protein GlmU.